The chain runs to 354 residues: Guanine nucleotide-binding protein G(i) subunit alpha (354 aa).

Residue Gly2 is the site of N-myristoyl glycine attachment. A lipid anchor (S-palmitoyl cysteine) is attached at Cys3. A G-alpha domain is found at Arg32–Phe354. The interval Lys35–Thr48 is G1 motif. GTP-binding positions include Gly40–Ser47, Leu175–Thr181, Asp200–Gln204, Asn269–Asp272, and Ala326. Residues Ser47 and Thr181 each coordinate Mg(2+). Residues Asp173 to Thr181 are G2 motif. The G3 motif stretch occupies residues Phe196–Arg205. Positions Ile265–Asp272 are G4 motif. Positions Thr324–Thr329 are G5 motif.

The protein belongs to the G-alpha family. G(i/o/t/z) subfamily. G proteins are composed of 3 units; alpha, beta and gamma. The alpha chain contains the guanine nucleotide binding site.

Functionally, guanine nucleotide-binding proteins (G proteins) are involved as modulators or transducers in various transmembrane signaling systems. This Planorbella trivolvis (Marsh rams-horn) protein is Guanine nucleotide-binding protein G(i) subunit alpha.